The following is a 374-amino-acid chain: uncharacterized protein (374 aa).

The N-terminal stretch at 1–23 is a signal peptide; that stretch reads MDSKWFFIVLISFLLVLPSIVTP. Residues 66–374 form a disordered region; that stretch reads SSSSSSSSSS…SSSSSSSGEN (309 aa).

It is found in the secreted. This is an uncharacterized protein from Dictyostelium discoideum (Social amoeba).